We begin with the raw amino-acid sequence, 236 residues long: Sensory rhodopsin I (236 aa).

Helical transmembrane passes span 6 to 26 (VVYGITAAGFAVGVAIVGFLY), 37 to 57 (ILAALALIPGVAGISYVAMVF), 74 to 94 (YLDWVVTTPLLVGFIGYTAGA), 98 to 118 (AIFGVMAADALMILAGVGAVV), 126 to 146 (ALFGVSAVFHISLFAYLYLIF), 167 to 187 (VGLLWIAYPLVWLAGPEGLGF), and 192 to 212 (GVSITYAFLDLLAKVPYVYFF). Residue lysine 205 is modified to N6-(retinylidene)lysine.

Belongs to the archaeal/bacterial/fungal opsin family. In terms of assembly, interacts with Htr1. In terms of processing, the covalent binding of retinal to the apoprotein, bacterioopsin, generates bacteriorhodopsin.

Its subcellular location is the membrane. In terms of biological role, photoattractant rhodopsin. This is Sensory rhodopsin I (sop1) from Haloarcula marismortui (strain ATCC 43049 / DSM 3752 / JCM 8966 / VKM B-1809) (Halobacterium marismortui).